A 297-amino-acid polypeptide reads, in one-letter code: GTPase Era (297 aa).

The 169-residue stretch at 5–173 (RAGFVSFVGR…TTELMRLLPV (169 aa)) folds into the Era-type G domain. The tract at residues 13 to 20 (GRPNVGKS) is G1. 13–20 (GRPNVGKS) serves as a coordination point for GTP. Residues 39-43 (QTTRR) are G2. The segment at 60–63 (DTPG) is G3. GTP contacts are provided by residues 60-64 (DTPGV) and 123-126 (TKID). Residues 123-126 (TKID) are G4. Residues 152-154 (VSA) form a G5 region. Residues 205 to 283 (VEDELPHSLA…FLSIRVKVAK (79 aa)) enclose the KH type-2 domain.

Belongs to the TRAFAC class TrmE-Era-EngA-EngB-Septin-like GTPase superfamily. Era GTPase family. As to quaternary structure, monomer.

It localises to the cytoplasm. The protein localises to the cell membrane. Functionally, an essential GTPase that binds both GDP and GTP, with rapid nucleotide exchange. Plays a role in 16S rRNA processing and 30S ribosomal subunit biogenesis and possibly also in cell cycle regulation and energy metabolism. In Leifsonia xyli subsp. xyli (strain CTCB07), this protein is GTPase Era.